Here is a 385-residue protein sequence, read N- to C-terminus: Cytochrome b (385 aa).

Transmembrane regions (helical) follow at residues 32–52 (MGSLLGLCLVIQIVTGIFMAM), 76–98 (YILRYLHANGASFFFMVMFMHMA), 113–133 (LWNVGVIIFILTIATAFLGYC), and 179–199 (FFALHYLVPFIIAAMVIMHLM). Residues histidine 82 and histidine 96 each coordinate heme b. Heme b is bound by residues histidine 183 and histidine 197. Histidine 202 contacts a ubiquinone. 4 helical membrane passes run 225-245 (FIFKDLVTVFLFMLILALFVF), 289-309 (LLGVITMFAAILVLLVLPFTD), 321-341 (LSKFFFFIFVFNFVLLGQIGA), and 348-368 (YVLMGQIATFIYFAYFLIIVP).

This sequence belongs to the cytochrome b family. In terms of assembly, fungal cytochrome b-c1 complex contains 10 subunits; 3 respiratory subunits, 2 core proteins and 5 low-molecular weight proteins. Cytochrome b-c1 complex is a homodimer. It depends on heme b as a cofactor.

The protein resides in the mitochondrion inner membrane. Functionally, component of the ubiquinol-cytochrome c reductase complex (complex III or cytochrome b-c1 complex) that is part of the mitochondrial respiratory chain. The b-c1 complex mediates electron transfer from ubiquinol to cytochrome c. Contributes to the generation of a proton gradient across the mitochondrial membrane that is then used for ATP synthesis. The chain is Cytochrome b (COB) from Saccharomyces paradoxus (Yeast).